Here is a 255-residue protein sequence, read N- to C-terminus: 3-dehydroquinate dehydratase (255 aa).

3-dehydroquinate contacts are provided by residues 47 to 49 (EWR) and Arg83. His145 acts as the Proton donor/acceptor in catalysis. The Schiff-base intermediate with substrate role is filled by Lys172. Residues Arg215, Ser234, and Gln238 each contribute to the 3-dehydroquinate site.

Belongs to the type-I 3-dehydroquinase family. Homodimer.

The catalysed reaction is 3-dehydroquinate = 3-dehydroshikimate + H2O. Its pathway is metabolic intermediate biosynthesis; chorismate biosynthesis; chorismate from D-erythrose 4-phosphate and phosphoenolpyruvate: step 3/7. Involved in the third step of the chorismate pathway, which leads to the biosynthesis of aromatic amino acids. Catalyzes the cis-dehydration of 3-dehydroquinate (DHQ) and introduces the first double bond of the aromatic ring to yield 3-dehydroshikimate. The chain is 3-dehydroquinate dehydratase from Clostridium kluyveri (strain NBRC 12016).